Consider the following 433-residue polypeptide: Enolase (433 aa).

(2R)-2-phosphoglycerate is bound at residue Gln-163. Glu-205 serves as the catalytic Proton donor. Asp-241, Glu-289, and Asp-316 together coordinate Mg(2+). (2R)-2-phosphoglycerate contacts are provided by Lys-341, Arg-370, Ser-371, and Lys-392. The active-site Proton acceptor is Lys-341.

It belongs to the enolase family. Mg(2+) is required as a cofactor.

It is found in the cytoplasm. The protein resides in the secreted. It localises to the cell surface. It catalyses the reaction (2R)-2-phosphoglycerate = phosphoenolpyruvate + H2O. It functions in the pathway carbohydrate degradation; glycolysis; pyruvate from D-glyceraldehyde 3-phosphate: step 4/5. Catalyzes the reversible conversion of 2-phosphoglycerate (2-PG) into phosphoenolpyruvate (PEP). It is essential for the degradation of carbohydrates via glycolysis. The polypeptide is Enolase (Treponema denticola (strain ATCC 35405 / DSM 14222 / CIP 103919 / JCM 8153 / KCTC 15104)).